The sequence spans 261 residues: Probable cyclic nucleotide phosphodiesterase PSM_A2567 (261 aa).

Fe cation-binding residues include Asp-22, His-24, Asp-62, Asn-94, His-160, His-198, and His-200. AMP is bound by residues His-24, Asp-62, and 94 to 95; that span reads NH. His-200 contributes to the AMP binding site.

The protein belongs to the cyclic nucleotide phosphodiesterase class-III family. The cofactor is Fe(2+).

In Pseudoalteromonas sp. (strain SM9913), this protein is Probable cyclic nucleotide phosphodiesterase PSM_A2567.